The primary structure comprises 140 residues: Large ribosomal subunit protein uL11 (140 aa).

The protein belongs to the universal ribosomal protein uL11 family. In terms of assembly, part of the ribosomal stalk of the 50S ribosomal subunit. Interacts with L10 and the large rRNA to form the base of the stalk. L10 forms an elongated spine to which L12 dimers bind in a sequential fashion forming a multimeric L10(L12)X complex. Post-translationally, one or more lysine residues are methylated.

Its function is as follows. Forms part of the ribosomal stalk which helps the ribosome interact with GTP-bound translation factors. This chain is Large ribosomal subunit protein uL11, found in Heliobacterium modesticaldum (strain ATCC 51547 / Ice1).